Consider the following 398-residue polypeptide: Spermatogenesis associated 6-like protein (398 aa).

The interval 170–215 (KLNGPANNRKKKPKEKNSDQLSKGTPFWGPSPQRLHLHRPTQRNPG) is disordered. 2 positions are modified to phosphoserine: Ser-269 and Ser-272.

It belongs to the SPATA6 family.

This chain is Spermatogenesis associated 6-like protein (Spata6l), found in Rattus norvegicus (Rat).